We begin with the raw amino-acid sequence, 235 residues long: Ribonuclease PH (235 aa).

Residues R86 and 124-126 contribute to the phosphate site; that span reads GTR.

It belongs to the RNase PH family. Homohexameric ring arranged as a trimer of dimers.

The enzyme catalyses tRNA(n+1) + phosphate = tRNA(n) + a ribonucleoside 5'-diphosphate. Phosphorolytic 3'-5' exoribonuclease that plays an important role in tRNA 3'-end maturation. Removes nucleotide residues following the 3'-CCA terminus of tRNAs; can also add nucleotides to the ends of RNA molecules by using nucleoside diphosphates as substrates, but this may not be physiologically important. Probably plays a role in initiation of 16S rRNA degradation (leading to ribosome degradation) during starvation. The sequence is that of Ribonuclease PH from Francisella tularensis subsp. mediasiatica (strain FSC147).